Reading from the N-terminus, the 251-residue chain is 2-C-methyl-D-erythritol 4-phosphate cytidylyltransferase (251 aa).

It belongs to the IspD/TarI cytidylyltransferase family. IspD subfamily.

The catalysed reaction is 2-C-methyl-D-erythritol 4-phosphate + CTP + H(+) = 4-CDP-2-C-methyl-D-erythritol + diphosphate. It participates in isoprenoid biosynthesis; isopentenyl diphosphate biosynthesis via DXP pathway; isopentenyl diphosphate from 1-deoxy-D-xylulose 5-phosphate: step 2/6. Its function is as follows. Catalyzes the formation of 4-diphosphocytidyl-2-C-methyl-D-erythritol from CTP and 2-C-methyl-D-erythritol 4-phosphate (MEP). The chain is 2-C-methyl-D-erythritol 4-phosphate cytidylyltransferase from Cupriavidus pinatubonensis (strain JMP 134 / LMG 1197) (Cupriavidus necator (strain JMP 134)).